Reading from the N-terminus, the 255-residue chain is Cullin-like protein 3 (255 aa).

This sequence belongs to the cullin family.

The polypeptide is Cullin-like protein 3 (Arabidopsis thaliana (Mouse-ear cress)).